An 852-amino-acid chain; its full sequence is Carbohydrate-responsive element-binding protein (852 aa).

Over residues 1–12 the composition is skewed to low complexity; that stretch reads MAGALAGLAAGL. Disordered regions lie at residues 1–36 and 54–80; these read MAGA…SLRR and VSSP…FGPR. 3 positions are modified to phosphoserine: Ser20, Ser23, and Ser25. At Thr27 the chain carries Phosphothreonine. Ser29 carries the post-translational modification Phosphoserine. A Phosphoserine modification is found at Ser196. Disordered regions lie at residues 328 to 365, 486 to 527, and 548 to 648; these read DSLF…CPGP, PCFS…NNPC, and STLL…NKTE. A compositionally biased stretch (low complexity) spans 505–521; that stretch reads ASPPTLAPATASPPTTA. A compositionally biased stretch (polar residues) spans 548-559; that stretch reads STLLRSPGSPQE. Ser556 carries the post-translational modification Phosphoserine; by AMPK. Over residues 568-584 the composition is skewed to pro residues; it reads FLPPTPAPTPPRPPPGP. 3 positions are modified to phosphoserine: Ser602, Ser614, and Ser631. A bHLH domain is found at 649–703; sequence NRRITHISAEQKRRFNIKLGFDTLHGLVSTLSAQPSLKVSKATTLQKTAEYILML. The leucine-zipper stretch occupies residues 703-724; it reads LQQERAGLQEEAQQLRDEIEEL.

In terms of assembly, binds DNA as a heterodimer with MLX/TCFL4. Phosphorylation at Ser-556 by AMPK inactivates the DNA-binding activity. As to expression, expressed in liver, heart, kidney, cerebellum and intestinal tissues.

Its subcellular location is the nucleus. Binds DNA as a heterodimer with MLX/TCFL4 and activates transcription. Binds to the canonical E box sequence 5'-CACGTG-3'. Plays a role in transcriptional activation of glycolytic target genes. Involved in glucose-responsive gene regulation. Regulates transcription in response to changes in cellular carbohydrate abundance such as occurs during fasting to feeding metabolic transition. Refeeding stimulates MLXIPL/ChREBP transcription factor, leading to increased BCKDK to PPM1K expression ratio, phosphorylation and activation of ACLY that ultimately results in the generation of malonyl-CoA and oxaloacetate immediate substrates of de novo lipogenesis and gluconeogenesis, respectively. This is Carbohydrate-responsive element-binding protein (MLXIPL) from Homo sapiens (Human).